The primary structure comprises 386 residues: Bifunctional desaturase/conjugase FADX (386 aa).

The interval 1–28 (MGAGGRMSVAPNNSKCEKKESRSVKRVP) is disordered. 2 helical membrane-spanning segments follow: residues 65-85 (LSFIFYSIATTYFHLLPSPIT) and 87-107 (IAWPVYWAFQGCILTSVWVLG). The short motif at 108–112 (HECGH) is the Histidine box-1 element. Residues 144-148 (HRRHH) carry the Histidine box-2 motif. The next 3 membrane-spanning stretches (helical) occupy residues 182–202 (ALTLVATLFIGWPLYLAFNVS), 228–248 (IYISDAMIFVAAYVLYKIAMA), and 250–270 (GLAWLVCIYGVPLLIVNALVV). The Histidine box-3 signature appears at 318–322 (HVIHH).

Belongs to the fatty acid desaturase type 1 family. Expressed exclusively in developing seeds.

It localises to the endoplasmic reticulum membrane. It catalyses the reaction a (9Z,12Z)-octadecadienoyl-containing glycerolipid + 2 Fe(II)-[cytochrome b5] + O2 + 2 H(+) = a (9Z,11E,13E)-octadecatrienoyl-containing glycerolipid + 2 Fe(III)-[cytochrome b5] + 2 H2O. The catalysed reaction is (9Z,12Z,15Z)-octadecatrienoyl-containing glycerolipid + 2 Fe(II)-[cytochrome b5] + O2 + 2 H(+) = a (9Z,11E,13E,15Z)-octadecatetraenoyl-containing glycerolipid + 2 Fe(III)-[cytochrome b5] + 2 H2O. The enzyme catalyses a (9Z)-octadecenoyl-containing glycerolipid + 2 Fe(II)-[cytochrome b5] + O2 + 2 H(+) = a (9Z,12E)-octadecadienoyl-containing glycerolipid + 2 Fe(III)-[cytochrome b5] + 2 H2O. It carries out the reaction a (9Z)-hexadecenoyl-containing glycerolipid + 2 Fe(II)-[cytochrome b5] + O2 + 2 H(+) = a (9Z,12E)-hexadecadienoyl-containing glycerolipid + 2 Fe(III)-[cytochrome b5] + 2 H2O. The protein operates within lipid metabolism; polyunsaturated fatty acid biosynthesis. Converts linoleic acid to alpha-eleostearic acid (18:3(9Z,11E,13E)) and alpha-linolenic acid to alpha-parinaric acid (18:4(9Z,11E,13E,15Z)). Converts a single cis double bond at carbon 12 to two conjugated trans bonds at positions 11 and 13. Can also act as a 12(E) desaturase when acting on the monounsaturated fatty acids oleate and palmitoleate, stereoselectively introducing a trans double bond. This chain is Bifunctional desaturase/conjugase FADX, found in Vernicia fordii (Tung).